We begin with the raw amino-acid sequence, 1026 residues long: Maternal effect protein staufen (1026 aa).

Residues 16–29 (AAHHHSHSHAHMHL) are compositionally biased toward basic residues. 3 disordered regions span residues 16–159 (AAHH…QLPP), 190–210 (NHYGSNANSNSGSNNSNSNYA), and 234–311 (TPVP…KDKT). Low complexity predominate over residues 70–111 (AQQQQQQQTSSNQAGAVAAAGAAYHHGNINSNSGSNISSNSN). Polar residues predominate over residues 112 to 126 (QMQKIRQQHQHLSSS). 2 stretches are compositionally biased toward low complexity: residues 192–210 (YGSNANSNSGSNNSNSNYA) and 234–256 (TPVPEPPVTTNNATTNSTSNSTV). Residues 267 to 284 (TSQKPETRQEPASADDHV) show a composition bias toward basic and acidic residues. The span at 285–303 (STGNIDATGALSNEDTSSS) shows a compositional bias: polar residues. DRBM domains are found at residues 311 to 378 (TPMC…ETMY) and 490 to 557 (PKFP…VLKT). Residues Ser-563 and Ser-570 each carry the phosphoserine modification. Residues 578–645 (SPISQVHEIG…AEKMLVELQK (68 aa)) form the DRBM 3 domain. Residues His-606, Lys-608, Lys-628, Lys-629, and Lys-632 each coordinate RNA. The interval 647-707 (PPLTPTKQTP…PPKDKLIDMD (61 aa)) is disordered. Thr-650 and Thr-655 each carry phosphothreonine. Ser-676 is subject to Phosphoserine. The segment covering 678 to 688 (VSGTDGPTQTG) has biased composition (polar residues). The 71-residue stretch at 711–781 (NPITKLIQLQ…AQALFELLEA (71 aa)) folds into the DRBM 4 domain. Positions 855–948 (ESKEEEANKE…SNSTSNTQSA (94 aa)) are disordered. Positions 864–890 (EVAVAAEENSNNSANSGDSSNSSSGDS) are enriched in low complexity. Positions 891–901 (QATEAASESAL) are enriched in polar residues. Composition is skewed to low complexity over residues 902–920 (NTSTGSNTSGVSSNSSNVG) and 934–947 (NTESSSNSTSNTQS). The region spanning 951-1018 (HMKEQLLYLS…ASNALKILSK (68 aa)) is the DRBM 5 domain.

Component of neuronal ribonucleoprotein complexes (RNPs) that contains at least various translational repressor and mRNA turnover proteins such as me31B, tral, Upf1, AGO2 and sometimes Fmr1. Polar granules at the posterior pole of the oocyte, and by the time the egg is laid, at the anterior pole.

It localises to the cytoplasm. Its subcellular location is the cytoplasmic ribonucleoprotein granule. Functionally, RNA-binding protein which forms ribonucleoprotein complexes (RNPs) that play critical roles in the localization, translational repression and turnover of RNAs during embryogenesis, neurotransmission and neurogenesis. In the oocyte, essential for the localization of both the osk/oskar mRNA to the posterior pole and bcd/bicoid RNA to the anterior pole, and is therefore required for the correct anterior-posterior patterning of the developing embryo. Association with osk or bcd at their respective poles, appears to promote the formation and stabilization of the ribonucleoprotein complexes. Integral component of diverse neuritic ribonucleoprotein complexes (RNPs) that mediate the transport, translation and turnover of neuronal RNAs during neuorgenesis and the translation repression of synaptic transcripts in preparation for their dendritic targeting. This Drosophila melanogaster (Fruit fly) protein is Maternal effect protein staufen (stau).